The sequence spans 619 residues: Chitinase C (619 aa).

An N-terminal signal peptide occupies residues 1–30 (MRFRHKAAALAATLALPLAGLVGLASPAQA). Residues 31 to 134 (ATSATATFAK…KLNGGSCDGT (104 aa)) form the CBM2 domain. The region spanning 144–229 (APGTPTASNI…GAVKVTTTGG (86 aa)) is the Fibronectin type-III domain. A disordered region spans residues 212-236 (ADQTGPASGAVKVTTTGGGDGGNPG). Residues 227-236 (TGGGDGGNPG) show a composition bias toward gly residues. The region spanning 240 to 619 (EVKMGYFTNW…TPAVRTTRRH (380 aa)) is the GH18 domain. Residues 312-313 (DQ) and 339-342 (GGWT) contribute to the chitin site. E382 (proton donor) is an active-site residue. Residues Y383, 449-452 (MTYD), and W589 contribute to the chitin site.

It belongs to the glycosyl hydrolase 18 family. Chitinase class II subfamily.

It carries out the reaction Random endo-hydrolysis of N-acetyl-beta-D-glucosaminide (1-&gt;4)-beta-linkages in chitin and chitodextrins.. The chain is Chitinase C (chiC) from Streptomyces lividans.